Reading from the N-terminus, the 104-residue chain is uncharacterized protein (104 aa).

This is an uncharacterized protein from Methanocaldococcus jannaschii (strain ATCC 43067 / DSM 2661 / JAL-1 / JCM 10045 / NBRC 100440) (Methanococcus jannaschii).